A 401-amino-acid chain; its full sequence is Argininosuccinate synthase (401 aa).

9–17 (AYSGGLDTS) serves as a coordination point for ATP. An L-citrulline-binding site is contributed by Tyr-86. Gly-116 provides a ligand contact to ATP. 3 residues coordinate L-aspartate: Thr-118, Asn-122, and Asp-123. Asn-122 is an L-citrulline binding site. L-citrulline contacts are provided by Arg-126, Ser-174, Ser-183, Glu-259, and Tyr-271.

The protein belongs to the argininosuccinate synthase family. Type 1 subfamily. As to quaternary structure, homotetramer.

It localises to the cytoplasm. The enzyme catalyses L-citrulline + L-aspartate + ATP = 2-(N(omega)-L-arginino)succinate + AMP + diphosphate + H(+). It participates in amino-acid biosynthesis; L-arginine biosynthesis; L-arginine from L-ornithine and carbamoyl phosphate: step 2/3. The chain is Argininosuccinate synthase from Bacillus thuringiensis subsp. konkukian (strain 97-27).